The following is a 742-amino-acid chain: Zinc finger protein 700 (742 aa).

The disordered stretch occupies residues 1–20 (MPCCSHRSCREDPGTSESRE). Over residues 8–20 (SCREDPGTSESRE) the composition is skewed to basic and acidic residues. Positions 24-104 (VAFEDVAVNF…KEDSHCGETF (81 aa)) constitute a KRAB domain. 9 C2H2-type zinc fingers span residues 194 to 216 (YACK…MVMH), 222 to 244 (YKCK…ERTH), 250 to 272 (YECK…ERTH), 278 to 300 (YECS…ERSH), 306 to 328 (YQCK…ERTH), 362 to 384 (YKCK…EKTH), 390 to 412 (YKCK…ERIH), 418 to 440 (YECK…GGTH), and 446 to 468 (YECK…GRTH). The C2H2-type 10; degenerate zinc finger occupies 474-502 (YECKECGKAFRYVKHLQIHERTEKHIRMP). 8 consecutive C2H2-type zinc fingers follow at residues 508-530 (YKCS…EKTH), 536-558 (YECN…ERTH), 564-586 (YECK…ERTH), 592-614 (YECK…GRTH), 620-642 (YECK…ERTH), 648-670 (YECK…ERKH), 676-698 (YECK…ARTH), and 704-726 (YECK…ARTH).

It belongs to the krueppel C2H2-type zinc-finger protein family.

The protein localises to the nucleus. May be involved in transcriptional regulation. The protein is Zinc finger protein 700 (ZNF700) of Homo sapiens (Human).